The primary structure comprises 855 residues: Pre-mRNA-splicing factor SYF1 (855 aa).

HAT repeat units lie at residues 15–47 (LVFE…FKQG), 48–80 (APKP…ARRA), 90–122 (PAYE…FLMD), 124–158 (GRVT…FLRS), 160–192 (PLPE…SSDR), 198–230 (QRLA…LISQ), 235–268 (VQSL…YYIR), 270–305 (GHFE…FEES), and 369–407 (GRPR…FYED). N6-acetyllysine is present on lysine 420. HAT repeat units lie at residues 498–530 (GTFQ…FLEE), 532–566 (KYFE…KFIS), 571–605 (RKLE…LEEE), 643–677 (YGVT…MECK), and 679–713 (GEID…FEVR). The disordered stretch occupies residues 808 to 855 (AELAQQANPEEIQLGEDEDEDEMDLEPNEVRLEQQSVPAAVFGSLKED). Over residues 820-834 (QLGEDEDEDEMDLEP) the composition is skewed to acidic residues. The residue at position 851 (serine 851) is a Phosphoserine.

This sequence belongs to the crooked-neck family. As to quaternary structure, associates with RNA polymerase II, the TCR-specific proteins CKN1/CSA and ERCC6/CSB, and XPA. Identified in the spliceosome C complex. Component of the XAB2 complex, a multimeric protein complex composed of XAB2, PRPF19, AQR, ZNF830, ISY1, and PPIE. Identified in a pentameric intron-binding (IB) complex composed of AQR, XAB2, ISY1, ZNF830 and PPIE that is incorporated into the spliceosome as a preassembled complex. The IB complex does not contain PRPF19.

Its subcellular location is the nucleus. Functionally, involved in pre-mRNA splicing as component of the spliceosome. Involved in transcription-coupled repair (TCR), transcription and pre-mRNA splicing. The chain is Pre-mRNA-splicing factor SYF1 (Xab2) from Rattus norvegicus (Rat).